Here is a 353-residue protein sequence, read N- to C-terminus: tRNA N(3)-cytidine methyltransferase METTL2 (353 aa).

The interval 1-37 (MAAPVVAADSPVIENMPETAGGATENSAEAQKRPQFG) is disordered. S-adenosyl-L-methionine contacts are provided by tryptophan 93, tyrosine 97, glycine 165, aspartate 190, aspartate 216, and isoleucine 237.

This sequence belongs to the methyltransferase superfamily. METL family. In terms of assembly, monomer.

It is found in the cytoplasm. The catalysed reaction is cytidine(32) in tRNA(Thr) + S-adenosyl-L-methionine = N(3)-methylcytidine(32) in tRNA(Thr) + S-adenosyl-L-homocysteine + H(+). It catalyses the reaction cytidine(32) in tRNA(Arg)(CCU) + S-adenosyl-L-methionine = N(3)-methylcytidine(32) in tRNA(Arg)(CCU) + S-adenosyl-L-homocysteine + H(+). Functionally, S-adenosyl-L-methionine-dependent methyltransferase that mediates N(3)-methylcytidine modification of residue 32 of the tRNA anticodon loop of tRNA(Thr)(UGU) and tRNA(Arg)(CCU). N(3)-methylcytidine methylation by mettl2a requires the N6-threonylcarbamoylation of tRNA (t6A37) by the EKC/KEOPS complex as prerequisite. In Danio rerio (Zebrafish), this protein is tRNA N(3)-cytidine methyltransferase METTL2 (mettl2a).